Reading from the N-terminus, the 212-residue chain is Uridine kinase (212 aa).

13 to 20 (GASASGKS) serves as a coordination point for ATP.

This sequence belongs to the uridine kinase family.

The protein resides in the cytoplasm. It catalyses the reaction uridine + ATP = UMP + ADP + H(+). The catalysed reaction is cytidine + ATP = CMP + ADP + H(+). It participates in pyrimidine metabolism; CTP biosynthesis via salvage pathway; CTP from cytidine: step 1/3. It functions in the pathway pyrimidine metabolism; UMP biosynthesis via salvage pathway; UMP from uridine: step 1/1. The chain is Uridine kinase from Shewanella denitrificans (strain OS217 / ATCC BAA-1090 / DSM 15013).